Consider the following 312-residue polypeptide: Magnesium protoporphyrin IX methyltransferase, chloroplastic (312 aa).

The N-terminal 39 residues, 1–39, are a transit peptide targeting the chloroplast; that stretch reads MPFAPSLLSSSSSVSQFLPRFPNATRFNVTPRSRAATVV.

It belongs to the class I-like SAM-binding methyltransferase superfamily. Magnesium protoporphyrin O-methyltransferase family.

The protein localises to the plastid. It localises to the chloroplast membrane. It is found in the chloroplast thylakoid membrane. It carries out the reaction Mg-protoporphyrin IX + S-adenosyl-L-methionine = Mg-protoporphyrin IX 13-monomethyl ester + S-adenosyl-L-homocysteine. It functions in the pathway porphyrin-containing compound metabolism; chlorophyll biosynthesis. Regulated by the folate status via an increased concentration of S-adenosyl-homocysteine (AdoHcy), a potent inhibitor of most AdoMet-dependent methyltransferases. In terms of biological role, converts Mg-protoporphyrin IX to Mg-protoporphyrin IX methylester using S-adenosyl-L-methionine as a cofactor. Involved in chloroplast-to-nucleus signaling by acting as a negative effector of nuclear photosynthetic gene expression. The protein is Magnesium protoporphyrin IX methyltransferase, chloroplastic (CHLM) of Arabidopsis thaliana (Mouse-ear cress).